Reading from the N-terminus, the 275-residue chain is Homeobox-leucine zipper protein ATHB-17 (275 aa).

The segment at 95-143 (SSPLSDEGSGGGRDQLRLDMNRLPSSEDGDDEEFSHDDGSAPPRKKLRL) is disordered. Residues 136 to 195 (PPRKKLRLTREQSRLLEDSFRQNHTLNPKQKEVLAKHLMLRPRQIEVWFQNRRARSKLKQ) constitute a DNA-binding region (homeobox). A leucine-zipper region spans residues 203–224 (LKRWFGSLTEENHRLHREVEEL). A disordered region spans residues 252–275 (AASPSRAVVPVPAKKTFPPQERDR).

Belongs to the HD-ZIP homeobox family. Class II subfamily.

It localises to the nucleus. Functionally, probable transcription factor. This chain is Homeobox-leucine zipper protein ATHB-17 (ATHB-17), found in Arabidopsis thaliana (Mouse-ear cress).